A 568-amino-acid chain; its full sequence is Cyclin-dependent kinase-like 2 (568 aa).

In terms of domain architecture, Protein kinase spans 4 to 289 (YENLGLVGEG…CADLLRHDFF (286 aa)). Residues 10 to 18 (VGEGSYGMV) and K33 each bind ATP. A [NKR]KIAxRE motif is present at residues 45–51 (KKIAMRE). D126 acts as the Proton acceptor in catalysis. Disordered regions lie at residues 309–333 (DARN…LGEE) and 545–568 (SHQG…EHQH). Residues 322-333 (RKKEKDDALGEE) show a composition bias toward basic and acidic residues.

The protein belongs to the protein kinase superfamily. CMGC Ser/Thr protein kinase family. CDC2/CDKX subfamily. As to expression, expressed in testis, kidney, lung and brain.

Its subcellular location is the cytoplasm. It is found in the nucleus. The enzyme catalyses L-seryl-[protein] + ATP = O-phospho-L-seryl-[protein] + ADP + H(+). It catalyses the reaction L-threonyl-[protein] + ATP = O-phospho-L-threonyl-[protein] + ADP + H(+). The polypeptide is Cyclin-dependent kinase-like 2 (Mus musculus (Mouse)).